Reading from the N-terminus, the 483-residue chain is Isocitrate dehydrogenase [NADP] (483 aa).

Threonine 74 serves as a coordination point for NADP(+). D-threo-isocitrate contacts are provided by serine 83, asparagine 85, arginine 89, arginine 99, and arginine 121. A Mg(2+)-binding site is contributed by aspartate 232. Residues 264–270 (HGSAPDI) and asparagine 277 contribute to the NADP(+) site.

It belongs to the isocitrate and isopropylmalate dehydrogenases family. As to quaternary structure, homodimer. It depends on Mg(2+) as a cofactor. The cofactor is Mn(2+).

The catalysed reaction is D-threo-isocitrate + NADP(+) = 2-oxoglutarate + CO2 + NADPH. Functionally, catalyzes the oxidative decarboxylation of isocitrate to 2-oxoglutarate and carbon dioxide with the concomitant reduction of NADP(+). The polypeptide is Isocitrate dehydrogenase [NADP] (icd) (Rickettsia felis (strain ATCC VR-1525 / URRWXCal2) (Rickettsia azadi)).